Reading from the N-terminus, the 285-residue chain is Probable endonuclease 4 (285 aa).

9 residues coordinate Zn(2+): H69, H109, E145, D179, H182, H216, D229, H231, and E261.

Belongs to the AP endonuclease 2 family. It depends on Zn(2+) as a cofactor.

It catalyses the reaction Endonucleolytic cleavage to 5'-phosphooligonucleotide end-products.. Endonuclease IV plays a role in DNA repair. It cleaves phosphodiester bonds at apurinic or apyrimidinic (AP) sites, generating a 3'-hydroxyl group and a 5'-terminal sugar phosphate. The chain is Probable endonuclease 4 from Enterobacter sp. (strain 638).